A 196-amino-acid chain; its full sequence is UMP-CMP kinase (196 aa).

13 to 18 (GAGKGT) is a binding site for ATP. The segment at 33 to 63 (SAGDLLRDERKRPGSQYGELIENYIKEGEIV) is NMP. A ribonucleoside 5'-phosphate contacts are provided by residues arginine 39, 61–63 (EIV), and 93–96 (GFPR). Residue asparagine 100 coordinates CMP. The segment at 133-143 (ERGKSSGRSDD) is LID. An ATP-binding site is contributed by arginine 134. The a ribonucleoside 5'-phosphate site is built by arginine 140 and arginine 151. Lysine 179 contributes to the ATP binding site.

The protein belongs to the adenylate kinase family. UMP-CMP kinase subfamily. In terms of assembly, monomer. Mg(2+) is required as a cofactor.

The protein resides in the nucleus. Its subcellular location is the cytoplasm. The enzyme catalyses CMP + ATP = CDP + ADP. It catalyses the reaction dCMP + ATP = dCDP + ADP. The catalysed reaction is UMP + ATP = UDP + ADP. It carries out the reaction a 2'-deoxyribonucleoside 5'-diphosphate + ATP = a 2'-deoxyribonucleoside 5'-triphosphate + ADP. The enzyme catalyses a ribonucleoside 5'-diphosphate + ATP = a ribonucleoside 5'-triphosphate + ADP. Functionally, catalyzes the phosphorylation of pyrimidine nucleoside monophosphates at the expense of ATP. Plays an important role in de novo pyrimidine nucleotide biosynthesis. Has preference for UMP and CMP as phosphate acceptors. Also displays broad nucleoside diphosphate kinase activity. This is UMP-CMP kinase (CMPK) from Gallus gallus (Chicken).